The primary structure comprises 76 residues: Immune protein Tsi5 (76 aa).

The next 2 membrane-spanning stretches (helical) occupy residues 19 to 39 (LLMTLVCIPLALLYVCLEWFF) and 43 to 63 (WVTVGVFFGVLVVLRLGLYLY).

Its subcellular location is the membrane. In terms of biological role, immunity protein that plays a role in preventing early activation of toxin Tse5. The sequence is that of Immune protein Tsi5 from Pseudomonas aeruginosa (strain ATCC 15692 / DSM 22644 / CIP 104116 / JCM 14847 / LMG 12228 / 1C / PRS 101 / PAO1).